We begin with the raw amino-acid sequence, 293 residues long: Caspase-6 (293 aa).

The disordered stretch occupies residues 1-20; it reads MSSEPPPRRARGPGEEQNMT. Positions 1–23 are excised as a propeptide; it reads MSSEPPPRRARGPGEEQNMTEID. Positions 42-44 are tri-arginine exosite; it reads KRR. S79 is subject to Phosphoserine. The active site involves H121. Residues 125-142 form a 130's region region; it reads NHIYAYDAKIEIQTLTGL. The active site involves C163. Residues 180–193 constitute a propeptide that is removed on maturation; sequence HRTDTPDANLTQVD. S257 is modified (phosphoserine). S-palmitoyl cysteine attachment occurs at residues C264 and C277.

It belongs to the peptidase C14A family. In terms of assembly, heterotetramer that consists of two anti-parallel arranged heterodimers, each one formed by a 18 kDa (p18) and a 11 kDa (p11) subunits. Interacts with BIRC6/bruce. Interacts with RIPK3. Heterotetramer that consists of two anti-parallel arranged heterodimers, each one formed by a 18 kDa (Caspase-6 subunit p18) and a 11 kDa (Caspase-6 subunit p11) subunit. Post-translationally, phosphorylated by NUAK1; phosphorylation inhibits self-activation. Phosphorylation at Ser-257 by AMP-activated protein kinase (PRKAA1 or PRKAA2) inhibits autocleavage, preventing caspase activation, thereby preventing hepatocyte apoptosis. In terms of processing, palmitoylation by ZDHHC17 blocks dimerization and subsequent activation, leading to inhibit the cysteine protease activity. Can be cleaved and activated by different caspases, depending on the context. Cleaved and activated by caspase-8 (CASP8) and subsequently by caspase-3 (CASP3). Can also undergo autoactivation by mediating autocleavage at Asp-179 and Asp-193, while it is not able to cleave its N-terminal disordered prodomain. Cleaved and activated by CASP1, possibly in the context of inflammation.

It localises to the cytoplasm. Its subcellular location is the nucleus. It carries out the reaction Strict requirement for Asp at position P1 and has a preferred cleavage sequence of Val-Glu-His-Asp-|-.. During activation, the N-terminal disordered prodomain is removed by cleavage. Concomitantly, double cleavage gives rise to a large 18-kDa and a small 11-kDa subunit. The two large and two small subunits then assemble to form the active CASP6 complex. Can be cleaved and activated by different caspases, depending on the context. Cleaved and activated by caspase-8 (CASP8) and subsequently by caspase-3 (CASP3). Can also undergo autoactivation by mediating autocleavage at Asp-179 and Asp-193, while it is not able to cleave its N-terminal disordered prodomain. Intramolecular cleavage at Asp-193 is a prerequisite for CASP6 self-activation. Cleaved and activated by CASP1 in neurons, possibly in the context of inflammation. Phosphorylation at Ser-257 inhibits autocleavage, preventing caspase activation. Its function is as follows. Cysteine protease that plays essential roles in programmed cell death, axonal degeneration, development and innate immunity. Acts as a non-canonical executioner caspase during apoptosis: localizes in the nucleus and cleaves the nuclear structural protein NUMA1 and lamin A/LMNA thereby inducing nuclear shrinkage and fragmentation. Lamin-A/LMNA cleavage is required for chromatin condensation and nuclear disassembly during apoptotic execution. Acts as a regulator of liver damage by promoting hepatocyte apoptosis: in absence of phosphorylation by AMP-activated protein kinase (AMPK), catalyzes cleavage of BID, leading to cytochrome c release, thereby participating in nonalcoholic steatohepatitis. Cleaves PARK7/DJ-1 in cells undergoing apoptosis. Involved in intrinsic apoptosis by mediating cleavage of RIPK1. Furthermore, cleaves many transcription factors such as NF-kappa-B and cAMP response element-binding protein/CREBBP. Cleaves phospholipid scramblase proteins XKR4 and XKR9. In addition to apoptosis, involved in different forms of programmed cell death. Plays an essential role in defense against viruses by acting as a central mediator of the ZBP1-mediated pyroptosis, apoptosis, and necroptosis (PANoptosis), independently of its cysteine protease activity. PANoptosis is a unique inflammatory programmed cell death, which provides a molecular scaffold that allows the interactions and activation of machinery required for inflammasome/pyroptosis, apoptosis and necroptosis. Mechanistically, interacts with RIPK3 and enhances the interaction between RIPK3 and ZBP1, leading to ZBP1-mediated inflammasome activation and cell death. Plays an essential role in axon degeneration during axon pruning which is the remodeling of axons during neurogenesis but not apoptosis. Regulates B-cell programs both during early development and after antigen stimulation. The sequence is that of Caspase-6 from Bos taurus (Bovine).